We begin with the raw amino-acid sequence, 188 residues long: Elongation factor P (188 aa).

This sequence belongs to the elongation factor P family.

The protein localises to the cytoplasm. It functions in the pathway protein biosynthesis; polypeptide chain elongation. Its function is as follows. Involved in peptide bond synthesis. Stimulates efficient translation and peptide-bond synthesis on native or reconstituted 70S ribosomes in vitro. Probably functions indirectly by altering the affinity of the ribosome for aminoacyl-tRNA, thus increasing their reactivity as acceptors for peptidyl transferase. The chain is Elongation factor P from Rhodopseudomonas palustris (strain ATCC BAA-98 / CGA009).